Reading from the N-terminus, the 575-residue chain is Glycine--tRNA ligase (575 aa).

Residues R96 and E162 each coordinate substrate. Residues 194–196 (RNE), 204–209 (IRLREF), 327–328 (EC), and 450–453 (GIDR) contribute to the ATP site. 209–213 (FTQAE) serves as a coordination point for substrate. 446–450 (EPSYG) serves as a coordination point for substrate.

It belongs to the class-II aminoacyl-tRNA synthetase family.

It is found in the cytoplasm. The catalysed reaction is tRNA(Gly) + glycine + ATP = glycyl-tRNA(Gly) + AMP + diphosphate. Functionally, catalyzes the attachment of glycine to tRNA(Gly). This is Glycine--tRNA ligase from Methanococcus maripaludis (strain C5 / ATCC BAA-1333).